The chain runs to 337 residues: Protein LEG1 homolog (337 aa).

The first 20 residues, 1 to 20, serve as a signal peptide directing secretion; sequence MAVLASWVWVLAGCFCAAVA. A glycan (N-linked (GlcNAc...) asparagine) is linked at Asn-171.

This sequence belongs to the LEG1 family.

The protein resides in the secreted. May be involved in early liver development. This Mus musculus (Mouse) protein is Protein LEG1 homolog.